The primary structure comprises 166 residues: Methylmalonyl-CoA epimerase, mitochondrial (166 aa).

Residues Met1–Gly23 constitute a mitochondrion transit peptide. The 130-residue stretch at Lys37–Lys166 folds into the VOC domain. Positions 40, 112, and 162 each coordinate Co(2+).

The protein belongs to the methylmalonyl-CoA epimerase family.

Its subcellular location is the mitochondrion. The catalysed reaction is (R)-methylmalonyl-CoA = (S)-methylmalonyl-CoA. In terms of biological role, methylmalonyl-CoA epimerase involved in propionyl-CoA metabolism. This is Methylmalonyl-CoA epimerase, mitochondrial (mcee) from Dictyostelium discoideum (Social amoeba).